Reading from the N-terminus, the 243-residue chain is Probable transcriptional regulatory protein LSEI_1022 (243 aa).

The interval 1 to 23 (MSGHSKWHNIQGRKNAQDSKRGK) is disordered.

The protein belongs to the TACO1 family.

Its subcellular location is the cytoplasm. This Lacticaseibacillus paracasei (strain ATCC 334 / BCRC 17002 / CCUG 31169 / CIP 107868 / KCTC 3260 / NRRL B-441) (Lactobacillus paracasei) protein is Probable transcriptional regulatory protein LSEI_1022.